Reading from the N-terminus, the 484-residue chain is tRNA-2-methylthio-N(6)-dimethylallyladenosine synthase (484 aa).

Positions 36–153 constitute an MTTase N-terminal domain; that stretch reads GKLYIKTHGC…LPELIRARRE (118 aa). [4Fe-4S] cluster contacts are provided by Cys45, Cys82, Cys116, Cys190, Cys194, and Cys197. The Radical SAM core domain occupies 176–415; it reads RAEGPSAFVS…HISAHAASIS (240 aa). In terms of domain architecture, TRAM spans 416 to 479; it reads QSMVGSVQRV…SNSLRGRIQL (64 aa). Residues 428–450 form a disordered region; sequence EGPSRRDPNELTGKSENMRPVNF.

This sequence belongs to the methylthiotransferase family. MiaB subfamily. Monomer. The cofactor is [4Fe-4S] cluster.

Its subcellular location is the cytoplasm. The enzyme catalyses N(6)-dimethylallyladenosine(37) in tRNA + (sulfur carrier)-SH + AH2 + 2 S-adenosyl-L-methionine = 2-methylsulfanyl-N(6)-dimethylallyladenosine(37) in tRNA + (sulfur carrier)-H + 5'-deoxyadenosine + L-methionine + A + S-adenosyl-L-homocysteine + 2 H(+). Functionally, catalyzes the methylthiolation of N6-(dimethylallyl)adenosine (i(6)A), leading to the formation of 2-methylthio-N6-(dimethylallyl)adenosine (ms(2)i(6)A) at position 37 in tRNAs that read codons beginning with uridine. The chain is tRNA-2-methylthio-N(6)-dimethylallyladenosine synthase from Xanthomonas oryzae pv. oryzae (strain KACC10331 / KXO85).